Reading from the N-terminus, the 874-residue chain is Alanine--tRNA ligase (874 aa).

Positions 562, 566, 665, and 669 each coordinate Zn(2+).

Belongs to the class-II aminoacyl-tRNA synthetase family. Zn(2+) is required as a cofactor.

The protein localises to the cytoplasm. It carries out the reaction tRNA(Ala) + L-alanine + ATP = L-alanyl-tRNA(Ala) + AMP + diphosphate. Functionally, catalyzes the attachment of alanine to tRNA(Ala) in a two-step reaction: alanine is first activated by ATP to form Ala-AMP and then transferred to the acceptor end of tRNA(Ala). Also edits incorrectly charged Ser-tRNA(Ala) and Gly-tRNA(Ala) via its editing domain. The sequence is that of Alanine--tRNA ligase from Pseudomonas fluorescens (strain ATCC BAA-477 / NRRL B-23932 / Pf-5).